A 1553-amino-acid chain; its full sequence is Dual oxidase 1 (1553 aa).

A signal peptide spans 1-21 (MGFRLALAWTLLVGPWMPMGA). Topologically, residues 22-596 (RNSISWEVQR…YFKGSGFGFG (575 aa)) are extracellular. The peroxidase-like; mediates peroxidase activity stretch occupies residues 26–593 (SWEVQRFDGW…MRDYFKGSGF (568 aa)). 4 N-linked (GlcNAc...) asparagine glycosylation sites follow: asparagine 94, asparagine 342, asparagine 354, and asparagine 534. The chain crosses the membrane as a helical span at residues 597–617 (VTIGTLCCFPLVSLLSAWIVA). The Cytoplasmic segment spans residues 618-1046 (QLRRRNFKRL…KRFVENYRRH (429 aa)). 3 consecutive EF-hand domains span residues 815–850 (PQDMFVESMFSLADKDGNGYLSFREFLDILVVFMKG), 851–886 (SPEEKSRLMFRMYDFDGNGLISKDEFIRMLRSFIEI), and 895–930 (QLTEVVESMFREAGFQDKQELTWEDFHFMLRDHDSE). Positions 828, 830, 832, 834, 839, 864, 866, 868, and 875 each coordinate Ca(2+). The interaction with TXNDC11 stretch occupies residues 956-1250 (YISQEKLCPS…GSFALIQLPR (295 aa)). Residues 1047–1067 (IGCLAVFYTIAGGLFLERAYY) traverse the membrane as a helical segment. The Extracellular portion of the chain corresponds to 1068–1082 (YAFAAHHMGITDTTR). Residues 1083–1103 (VGIILSRGTAASISFMFSYIL) form a helical membrane-spanning segment. Residues 1089–1271 (RGTAASISFM…YVGDKLVSLS (183 aa)) form the Ferric oxidoreductase domain. Over 1104-1138 (LTMCRNLITFLRETFLNRYVPFDAAVDFHRLIAST) the chain is Cytoplasmic. The chain crosses the membrane as a helical span at residues 1139-1159 (AIILTVLHSAGHVVNVYLFSI). Over 1160 to 1190 (SPLSVLSCLFPGLFHDNGSEFPQKYYWWFFQ) the chain is Extracellular. A helical transmembrane segment spans residues 1191 to 1211 (TVPGLTGVMLLLILAIMYVFA). Over 1212–1228 (SHHFRRCSFRGFWLTHH) the chain is Cytoplasmic. Residues 1229 to 1249 (LYILLYMLLIIHGSFALIQLP) form a helical membrane-spanning segment. A topological domain (extracellular) is located at residue arginine 1250. Residues 1251–1271 (FHIFFLVPALIYVGDKLVSLS) form a helical membrane-spanning segment. An FAD-binding FR-type domain is found at 1272–1378 (RKKVEISVVK…DGPFGEGHQE (107 aa)). The Cytoplasmic portion of the chain corresponds to 1272-1553 (RKKVEISVVK…THFSHHYENF (282 aa)).

This sequence in the N-terminal section; belongs to the peroxidase family. In terms of assembly, interacts with TXNDC11, TPO and CYBA. In terms of processing, N-glycosylated. As to expression, specifically expressed in thyroid.

It is found in the apical cell membrane. It carries out the reaction NADH + O2 + H(+) = H2O2 + NAD(+). It catalyses the reaction NADPH + O2 + H(+) = H2O2 + NADP(+). Its pathway is hormone biosynthesis; thyroid hormone biosynthesis. Its activity is regulated as follows. The NADPH oxidase activity is calcium-dependent. Peroxidase activity is inhibited by aminobenzohydrazide. Generates hydrogen peroxide which is required for the activity of thyroid peroxidase/TPO and lactoperoxidase/LPO. Plays a role in thyroid hormones synthesis and lactoperoxidase-mediated antimicrobial defense at the surface of mucosa. May have its own peroxidase activity through its N-terminal peroxidase-like domain. The sequence is that of Dual oxidase 1 (DUOX1) from Sus scrofa (Pig).